Here is a 223-residue protein sequence, read N- to C-terminus: Killer cell lectin-like receptor subfamily B member 1B allele A (223 aa).

Topologically, residues 1–43 (MDSTTLVYADLNLARIQEPKHDSPPSLSPDTCRCPRWHRLALK) are cytoplasmic. Positions 6-11 (LVYADL) match the ITIM motif motif. An LCK-binding motif motif is present at residues 32–35 (CRCP). A helical; Signal-anchor for type II membrane protein membrane pass occupies residues 44–63 (FGCAGLILLVLVVIGLCVLV). Over 64–223 (LSVQKSSVQK…LNHETPSNDS (160 aa)) the chain is Extracellular. One can recognise a C-type lectin domain in the interval 93–212 (ECPQDWLSHR…STDNRWICQK (120 aa)). 2 disulfide bridges follow: C122–C210 and C189–C202.

In terms of assembly, homodimer; disulfide-linked. Interacts with tyrosine kinase LCK. Binds PTPN6/SHP-1 in a phosphorylation-dependent manner. In terms of tissue distribution, expressed in NK cells and a subset of T-cells.

The protein resides in the membrane. Functionally, receptor for CLEC2D/OCIL. Ligand-binding contributes to inhibition of cytotoxic natural killer (NK) cells. May mediate MHC class I-independent 'missing-self' recognition of allografts, tumor cells and virus-infected cells. In Mus musculus (Mouse), this protein is Killer cell lectin-like receptor subfamily B member 1B allele A (Klrb1b).